Here is a 262-residue protein sequence, read N- to C-terminus: Taurine import ATP-binding protein TauB (262 aa).

Residues 4 to 233 enclose the ABC transporter domain; sequence LELERISAQY…RYAAGESARA (230 aa). 38-45 is an ATP binding site; sequence GPSGSGKT.

Belongs to the ABC transporter superfamily. Taurine importer (TC 3.A.1.17.1) family. As to quaternary structure, the complex is composed of two ATP-binding proteins (TauB), two transmembrane proteins (TauC) and a solute-binding protein (TauA).

The protein resides in the cell inner membrane. The catalysed reaction is taurine(out) + ATP + H2O = taurine(in) + ADP + phosphate + H(+). In terms of biological role, part of the ABC transporter complex TauABC involved in taurine import. Responsible for energy coupling to the transport system. In Pseudomonas putida (Arthrobacter siderocapsulatus), this protein is Taurine import ATP-binding protein TauB.